A 273-amino-acid polypeptide reads, in one-letter code: 2,3,4,5-tetrahydropyridine-2,6-dicarboxylate N-succinyltransferase (273 aa).

Substrate-binding residues include R104 and D141.

It belongs to the transferase hexapeptide repeat family. In terms of assembly, homotrimer.

It localises to the cytoplasm. The catalysed reaction is (S)-2,3,4,5-tetrahydrodipicolinate + succinyl-CoA + H2O = (S)-2-succinylamino-6-oxoheptanedioate + CoA. It participates in amino-acid biosynthesis; L-lysine biosynthesis via DAP pathway; LL-2,6-diaminopimelate from (S)-tetrahydrodipicolinate (succinylase route): step 1/3. The sequence is that of 2,3,4,5-tetrahydropyridine-2,6-dicarboxylate N-succinyltransferase from Thioalkalivibrio sulfidiphilus (strain HL-EbGR7).